Reading from the N-terminus, the 284-residue chain is Homeobox protein SIX1 (284 aa).

The segment at residues 124–183 (GEETSYCFKEKSRGVLREWYAHNPYPSPREKRELAEATGLTTTQVSNWFKNRRQRDRAAE) is a DNA-binding region (homeobox). The interval 168-269 (VSNWFKNRRQ…LQTHQHQLQD (102 aa)) is disordered. Basic and acidic residues predominate over residues 179–190 (DRAAEAKERENT). Positions 242-269 (RSSNYSLPGLTASQPSHGLQTHQHQLQD) are enriched in polar residues.

Belongs to the SIX/Sine oculis homeobox family. In terms of assembly, interacts with DACH1. Interacts with EYA1. Interacts with EYA2. Interacts with CDH1. Interacts with TBX18. Interacts with CEBPA. Interacts with CEBPB. Interacts with EBF2. In terms of processing, phosphorylated during interphase; becomes hyperphosphorylated during mitosis. Hyperphosphorylation impairs binding to promoter elements. Post-translationally, ubiquitinated by the anaphase promoting complex (APC), leading to its proteasomal degradation. Specifically expressed in skeletal muscle.

It localises to the nucleus. The protein localises to the cytoplasm. Functionally, transcription factor that is involved in the regulation of cell proliferation, apoptosis and embryonic development. Plays an important role in the development of several organs, including kidney, muscle and inner ear. Depending on context, functions as a transcriptional repressor or activator. Lacks an activation domain, and requires interaction with EYA family members for transcription activation. Mediates nuclear translocation of EYA1 and EYA2. Binds the 5'-TCA[AG][AG]TTNC-3' motif present in the MEF3 element in the MYOG promoter and CIDEA enhancer. Regulates the expression of numerous genes, including MYC, CCND1 and EZR. Acts as an activator of the IGFBP5 promoter, probably coactivated by EYA2. Repression of precursor cell proliferation in myoblasts is switched to activation through recruitment of EYA3 to the SIX1-DACH1 complex. During myogenesis, seems to act together with EYA2 and DACH2. Regulates the expression of CCNA1. Promotes brown adipocyte differentiation. This Homo sapiens (Human) protein is Homeobox protein SIX1 (SIX1).